The chain runs to 480 residues: Aspartyl/glutamyl-tRNA(Asn/Gln) amidotransferase subunit B (480 aa).

The protein belongs to the GatB/GatE family. GatB subfamily. In terms of assembly, heterotrimer of A, B and C subunits.

It carries out the reaction L-glutamyl-tRNA(Gln) + L-glutamine + ATP + H2O = L-glutaminyl-tRNA(Gln) + L-glutamate + ADP + phosphate + H(+). The enzyme catalyses L-aspartyl-tRNA(Asn) + L-glutamine + ATP + H2O = L-asparaginyl-tRNA(Asn) + L-glutamate + ADP + phosphate + 2 H(+). Functionally, allows the formation of correctly charged Asn-tRNA(Asn) or Gln-tRNA(Gln) through the transamidation of misacylated Asp-tRNA(Asn) or Glu-tRNA(Gln) in organisms which lack either or both of asparaginyl-tRNA or glutaminyl-tRNA synthetases. The reaction takes place in the presence of glutamine and ATP through an activated phospho-Asp-tRNA(Asn) or phospho-Glu-tRNA(Gln). The sequence is that of Aspartyl/glutamyl-tRNA(Asn/Gln) amidotransferase subunit B from Hahella chejuensis (strain KCTC 2396).